Consider the following 555-residue polypeptide: CTP synthase (555 aa).

The segment at 1 to 271 (MVKRGKKTKY…DDKLAELFNI (271 aa)) is amidoligase domain. Ser19 contributes to the CTP binding site. UTP is bound at residue Ser19. Residues 20 to 25 (SLGKGL) and Asp77 each bind ATP. 2 residues coordinate Mg(2+): Asp77 and Glu145. Residues 152-154 (DIE), 192-197 (KTKPTQ), and Lys228 contribute to the CTP site. Residues 192-197 (KTKPTQ) and Lys228 contribute to the UTP site. Residues 297–537 (RIGIVGKYVE…VKAALEHRDA (241 aa)) form the Glutamine amidotransferase type-1 domain. Gly358 contacts L-glutamine. Cys385 serves as the catalytic Nucleophile; for glutamine hydrolysis. L-glutamine contacts are provided by residues 386–389 (LGLQ), Glu409, and Arg466. Residues His510 and Glu512 contribute to the active site. Residues 535-555 (RDAQQRQPPAEVKKLAVGKNG) form a disordered region.

The protein belongs to the CTP synthase family. In terms of assembly, homotetramer.

The catalysed reaction is UTP + L-glutamine + ATP + H2O = CTP + L-glutamate + ADP + phosphate + 2 H(+). It catalyses the reaction L-glutamine + H2O = L-glutamate + NH4(+). It carries out the reaction UTP + NH4(+) + ATP = CTP + ADP + phosphate + 2 H(+). It participates in pyrimidine metabolism; CTP biosynthesis via de novo pathway; CTP from UDP: step 2/2. With respect to regulation, allosterically activated by GTP, when glutamine is the substrate; GTP has no effect on the reaction when ammonia is the substrate. The allosteric effector GTP functions by stabilizing the protein conformation that binds the tetrahedral intermediate(s) formed during glutamine hydrolysis. Inhibited by the product CTP, via allosteric rather than competitive inhibition. In terms of biological role, catalyzes the ATP-dependent amination of UTP to CTP with either L-glutamine or ammonia as the source of nitrogen. Regulates intracellular CTP levels through interactions with the four ribonucleotide triphosphates. In Anaeromyxobacter dehalogenans (strain 2CP-1 / ATCC BAA-258), this protein is CTP synthase.